We begin with the raw amino-acid sequence, 380 residues long: S-phase entry cyclin-6 (380 aa).

Residues 63–91 (PRGKLQRDSTHLEKTRKRQLSNDSTDPIE) are disordered.

It belongs to the cyclin family. Cyclin AB subfamily.

Functionally, involved in G1/S and or S phase progression. Interacts with CDC28. The polypeptide is S-phase entry cyclin-6 (CLB6) (Saccharomyces cerevisiae (strain ATCC 204508 / S288c) (Baker's yeast)).